The following is a 308-amino-acid chain: Aspartate carbamoyltransferase catalytic subunit (308 aa).

R55 and T56 together coordinate carbamoyl phosphate. K83 is a binding site for L-aspartate. R105, H133, and Q136 together coordinate carbamoyl phosphate. 2 residues coordinate L-aspartate: R166 and R220. Residues G261 and P262 each contribute to the carbamoyl phosphate site.

Belongs to the aspartate/ornithine carbamoyltransferase superfamily. ATCase family. Heterododecamer (2C3:3R2) of six catalytic PyrB chains organized as two trimers (C3), and six regulatory PyrI chains organized as three dimers (R2).

The catalysed reaction is carbamoyl phosphate + L-aspartate = N-carbamoyl-L-aspartate + phosphate + H(+). The protein operates within pyrimidine metabolism; UMP biosynthesis via de novo pathway; (S)-dihydroorotate from bicarbonate: step 2/3. Catalyzes the condensation of carbamoyl phosphate and aspartate to form carbamoyl aspartate and inorganic phosphate, the committed step in the de novo pyrimidine nucleotide biosynthesis pathway. This Chlorobium limicola (strain DSM 245 / NBRC 103803 / 6330) protein is Aspartate carbamoyltransferase catalytic subunit.